Consider the following 525-residue polypeptide: MQIRHFNRLKRSVLLFASVLLLSACQIESQPKSEFEKIQERGVLRVGTLNNQLSYYIGPDGPAGLDYELARKFAEELGVKLEIKPAFRQADLFPALKKGDIDIIATGLNQTSQAVKRFRPGPAYYYVSQQVVYKKGQLRPRDIEQLIEYQASKDSQSEEDVNAGAQTLKIVEQSQYVPTLTALKKQYPELQFEIVGDADTRDLLKHVSTGELRFTVTDSVELSLAQRLYPDLALAFELTEDQPVSWFTRRSEDESLYAMLIEFFGNIKQSGELASLEEKYIGHIEAFDYVDTRAFIRALDDKLPRWAPLFQKYSEEFDWRLIAALAYQESHWKPKAKSPTGVRGMMMLTLPTAKSVGVTDRLNPEQSVRGGVEYLRRIVARVPDTINEHEKIWFALASYNIGYGHMMDARRLTKAQGGDPNAWADVKDRLPLLRQKRYYSQTRYGYARGDEARNYVENIRRYYQSIIGHVSQKPSIDEDTDDLQVIPPLNPELLISGAVETIAEEVSGASDITNEVDEDLDQEEE.

Residues 1–24 (MQIRHFNRLKRSVLLFASVLLLSA) form the signal peptide. The segment at 25-284 (CQIESQPKSE…SLEEKYIGHI (260 aa)) is non-LT domain. The segment at 286–525 (AFDYVDTRAF…VDEDLDQEEE (240 aa)) is LT domain. Glu329 is a catalytic residue. The interval 506 to 525 (VSGASDITNEVDEDLDQEEE) is disordered. Residues 514-525 (NEVDEDLDQEEE) show a composition bias toward acidic residues.

This sequence in the N-terminal section; belongs to the bacterial solute-binding protein 3 family. It in the C-terminal section; belongs to the transglycosylase Slt family.

Its subcellular location is the cell outer membrane. It carries out the reaction Exolytic cleavage of the (1-&gt;4)-beta-glycosidic linkage between N-acetylmuramic acid (MurNAc) and N-acetylglucosamine (GlcNAc) residues in peptidoglycan, from either the reducing or the non-reducing ends of the peptidoglycan chains, with concomitant formation of a 1,6-anhydrobond in the MurNAc residue.. Its function is as follows. Murein-degrading enzyme that degrades murein glycan strands and insoluble, high-molecular weight murein sacculi, with the concomitant formation of a 1,6-anhydromuramoyl product. Lytic transglycosylases (LTs) play an integral role in the metabolism of the peptidoglycan (PG) sacculus. Their lytic action creates space within the PG sacculus to allow for its expansion as well as for the insertion of various structures such as secretion systems and flagella. The polypeptide is Membrane-bound lytic murein transglycosylase F (Vibrio parahaemolyticus serotype O3:K6 (strain RIMD 2210633)).